The chain runs to 461 residues: Argininosuccinate lyase (461 aa).

This sequence belongs to the lyase 1 family. Argininosuccinate lyase subfamily.

Its subcellular location is the cytoplasm. It catalyses the reaction 2-(N(omega)-L-arginino)succinate = fumarate + L-arginine. It participates in amino-acid biosynthesis; L-arginine biosynthesis; L-arginine from L-ornithine and carbamoyl phosphate: step 3/3. This Dehalococcoides mccartyi (strain ATCC BAA-2266 / KCTC 15142 / 195) (Dehalococcoides ethenogenes (strain 195)) protein is Argininosuccinate lyase.